The sequence spans 295 residues: MPGSTRKLPVWLPILVLLIAMSSIQSGASLAKSLFPLVGAPGVTALRLALGTLILIAFFKPWRLRFAKEQRLPLLFYGLSLGGMNYLFYLSIQTVPLGIAVALEFTGPLAVALFSSRRPVDFIWVVLAVLGLWFLLPLGQDMSHVDLTGAALALGAGACWAVYILTGQRAGAEHGPATVAVGSLIAAIIFVPIGAVQAGDALWHWSILPLGLAVAVLSTALPYSLEMIALTRLPTRTFGTLMSMEPALAAVSGMIFLGETLTGIQILALCAIIAASMGSTLTIRREPQIKQVDVK.

At Met1–Lys7 the chain is on the cytoplasmic side. Residues Leu8 to Ala28 form a helical membrane-spanning segment. At Ser29–Val38 the chain is on the periplasmic side. Residues Leu30 to Leu135 enclose the EamA 1 domain. A helical membrane pass occupies residues Gly39–Phe59. Residues Lys60–Arg71 are Cytoplasmic-facing. Residues Leu72–Ile92 form a helical membrane-spanning segment. A topological domain (periplasmic) is located at residue Gln93. Residues Thr94 to Phe114 traverse the membrane as a helical segment. Over Ser115–Arg118 the chain is Cytoplasmic. Residues Pro119–Gly139 form a helical membrane-spanning segment. Residues Gln140–Asp146 lie on the Periplasmic side of the membrane. Residues Leu147 to Gly167 form a helical membrane-spanning segment. The region spanning Cys159 to Gly278 is the EamA 2 domain. At Gln168–Gly175 the chain is on the cytoplasmic side. Residues Pro176–Val196 form a helical membrane-spanning segment. The Periplasmic segment spans residues Gln197–Asp200. A helical membrane pass occupies residues Ala201–Leu221. The Cytoplasmic portion of the chain corresponds to Pro222–Thr237. A helical membrane pass occupies residues Phe238 to Gly258. The Periplasmic portion of the chain corresponds to Glu259–Thr262. The chain crosses the membrane as a helical span at residues Gly263 to Ile283. At Arg284–Lys295 the chain is on the cytoplasmic side.

The protein belongs to the drug/metabolite transporter (DMT) superfamily. 10 TMS drug/metabolite exporter (DME) (TC 2.A.7.3) family.

Its subcellular location is the cell inner membrane. Its function is as follows. Involved in the efflux of threonine and homoserine. In Salmonella typhimurium (strain SL1344), this protein is Threonine/homoserine exporter RhtA (rhtA).